A 529-amino-acid chain; its full sequence is GTPase Obg (529 aa).

An Obg domain is found at 2–159 (PTFVDRVVLH…LDAVLELKTV (158 aa)). Residues 62 to 86 (FHPHQRASRGRPGQGSNRHGADGAD) are disordered. The region spanning 160–332 (ADVALVGFPS…LSLALADLVA (173 aa)) is the OBG-type G domain. GTP-binding positions include 166–173 (GFPSAGKS), 191–195 (FTTLV), 213–216 (DVPG), 284–287 (NKID), and 313–315 (STA). Positions 173 and 193 each coordinate Mg(2+). Residues 350-427 (PRAVNEPDFT…IGEVTFDWEP (78 aa)) enclose the OCT domain. Disordered regions lie at residues 434 to 494 (LGNG…DRLR) and 506 to 529 (ARRAAAVVDPAVRGEPAGRGEEEG). Composition is skewed to low complexity over residues 461–472 (AGTAASGAAPSP) and 508–520 (RAAAVVDPAVRGE).

The protein belongs to the TRAFAC class OBG-HflX-like GTPase superfamily. OBG GTPase family. As to quaternary structure, monomer. The cofactor is Mg(2+).

It localises to the cytoplasm. Functionally, an essential GTPase which binds GTP, GDP and possibly (p)ppGpp with moderate affinity, with high nucleotide exchange rates and a fairly low GTP hydrolysis rate. Plays a role in control of the cell cycle, stress response, ribosome biogenesis and in those bacteria that undergo differentiation, in morphogenesis control. This Frankia casuarinae (strain DSM 45818 / CECT 9043 / HFP020203 / CcI3) protein is GTPase Obg.